Reading from the N-terminus, the 204-residue chain is Large ribosomal subunit protein eL15y (204 aa).

Residues 162-204 (RGLTSEGKKNRGLRGKGHNNHKNRPSRRATWKKNNSISLRRYR) form a disordered region. Positions 171–192 (NRGLRGKGHNNHKNRPSRRATW) are enriched in basic residues. Residues 193-204 (KKNNSISLRRYR) show a composition bias toward polar residues.

The protein belongs to the eukaryotic ribosomal protein eL15 family.

In Arabidopsis thaliana (Mouse-ear cress), this protein is Large ribosomal subunit protein eL15y (RPL15B).